The sequence spans 286 residues: Protein NipSnap homolog 2 (286 aa).

The N-terminal 40 residues, 1–40, are a transit peptide targeting the mitochondrion; that stretch reads MATRVLHSSCSGLYRAAGPARGKGHATAVIRSLSASHNRP.

Belongs to the NipSnap family.

The protein localises to the mitochondrion matrix. Functionally, protein involved in mitophagy. Accumulates on the mitochondria surface in response to mitochondrial depolarization and acts as a 'eat me' signal by recruiting proteins involved in selective autophagy. This is Protein NipSnap homolog 2 (nipsnap2) from Danio rerio (Zebrafish).